The sequence spans 760 residues: Catalase-peroxidase (760 aa).

Residues 1-24 (MAESKCPFKSQGSRSNVAGGGTRN) form a disordered region. Residues 96-242 (WHSAGTYRVF…LAAAHMGLIY (147 aa)) constitute a cross-link (tryptophyl-tyrosyl-methioninium (Trp-Tyr) (with M-268)). The Proton acceptor role is filled by His97. Residues 242–268 (YVNPEGPDGNPDPVAAAHDIRVTFGRM) constitute a cross-link (tryptophyl-tyrosyl-methioninium (Tyr-Met) (with W-96)). His283 is a heme b binding site.

The protein belongs to the peroxidase family. Peroxidase/catalase subfamily. As to quaternary structure, homodimer or homotetramer. Heme b serves as cofactor. Post-translationally, formation of the three residue Trp-Tyr-Met cross-link is important for the catalase, but not the peroxidase activity of the enzyme.

It is found in the cytoplasm. The catalysed reaction is H2O2 + AH2 = A + 2 H2O. The enzyme catalyses 2 H2O2 = O2 + 2 H2O. Functionally, bifunctional enzyme with both catalase and broad-spectrum peroxidase activity. This is Catalase-peroxidase from Aspergillus clavatus (strain ATCC 1007 / CBS 513.65 / DSM 816 / NCTC 3887 / NRRL 1 / QM 1276 / 107).